The primary structure comprises 112 residues: UPF0060 membrane protein AAur_4166 (112 aa).

A run of 4 helical transmembrane segments spans residues 8–28 (ILFVLAAVAEIGGAWLIWQAV), 33–53 (AWWWAGLGVVALGIYGFFAAF), 62–82 (VLAAYGGVFIAGSLGWGMLMD), and 91–111 (VIGAAICIVGVGVIMFAPRPG).

This sequence belongs to the UPF0060 family.

The protein localises to the cell membrane. This Paenarthrobacter aurescens (strain TC1) protein is UPF0060 membrane protein AAur_4166.